A 151-amino-acid chain; its full sequence is Gametocyte-specific factor 1-like (151 aa).

2 CHHC U11-48K-type zinc fingers span residues 6 to 33 (IEICPYNPHHRIPLSRFQYHLASCRKKN) and 40 to 67 (MASCKYNACHVVPIRKLAEHEATCVNRS). Zn(2+) is bound by residues Cys9, His15, His25, Cys29, Cys43, His49, His59, and Cys63. The tract at residues 130–151 (QESRGGDQCPEDPQTRTRKANF) is disordered.

This sequence belongs to the UPF0224 (FAM112) family.

This chain is Gametocyte-specific factor 1-like (Gtsf1l), found in Mus musculus (Mouse).